A 337-amino-acid polypeptide reads, in one-letter code: Large ribosomal subunit protein uL3 (337 aa).

The protein belongs to the universal ribosomal protein uL3 family. Part of the 50S ribosomal subunit. Forms a cluster with proteins L14 and L24e.

One of the primary rRNA binding proteins, it binds directly near the 3'-end of the 23S rRNA, where it nucleates assembly of the 50S subunit. The sequence is that of Large ribosomal subunit protein uL3 from Methanospirillum hungatei JF-1 (strain ATCC 27890 / DSM 864 / NBRC 100397 / JF-1).